The chain runs to 460 residues: Phosphomethylpyrimidine synthase (460 aa).

Substrate-binding positions include Asn80, Met109, Tyr139, His175, 195–197 (SRG), 236–239 (DSLR), and Glu275. His279 serves as a coordination point for Zn(2+). Residue Tyr302 coordinates substrate. Residue His343 participates in Zn(2+) binding. The [4Fe-4S] cluster site is built by Cys423, Cys426, and Cys431.

Belongs to the ThiC family. The cofactor is [4Fe-4S] cluster.

The enzyme catalyses 5-amino-1-(5-phospho-beta-D-ribosyl)imidazole + S-adenosyl-L-methionine = 4-amino-2-methyl-5-(phosphooxymethyl)pyrimidine + CO + 5'-deoxyadenosine + formate + L-methionine + 3 H(+). It functions in the pathway cofactor biosynthesis; thiamine diphosphate biosynthesis. Functionally, catalyzes the synthesis of the hydroxymethylpyrimidine phosphate (HMP-P) moiety of thiamine from aminoimidazole ribotide (AIR) in a radical S-adenosyl-L-methionine (SAM)-dependent reaction. The sequence is that of Phosphomethylpyrimidine synthase from Rippkaea orientalis (strain PCC 8801 / RF-1) (Cyanothece sp. (strain PCC 8801)).